We begin with the raw amino-acid sequence, 339 residues long: MKTGEIPLSSSTYINFKQYLASVKPAGAALPTGLQDLLIAVVNTCSKLSHEVAQGALIGLLGPAGTGNVQGEVQQKLDIIANDLLIDGVQGCKSLAGLASEEMELPVPVQGTGDYLLLFDPLDGSSNIDVNVSIGTIFSVLKKQDPAAPLQTSDFLLSGRHQVAAGYVVYGPQTTMALTLGDGVVMFTLNKVTGEFLLIKDSVTISHSTKEFAINMSNMRHWADPVRRYVEECLAGVSGARDKDFNMRWIASMVADVHRVLSRGGVFMYPWDQREPHKPGKLRLMYEVNPMSFLVEQAGGVSTNGTDLIMDLQPTDLHERVSVMLGSKEEIDRIQHYHS.

4 residues coordinate Mg(2+): Glu101, Asp120, Leu122, and Asp123. Residues 123–126 (DGSS), Asn215, and Lys281 each bind substrate. A Mg(2+)-binding site is contributed by Glu287.

The protein belongs to the FBPase class 1 family. As to quaternary structure, homotetramer. The cofactor is Mg(2+).

It localises to the cytoplasm. It catalyses the reaction beta-D-fructose 1,6-bisphosphate + H2O = beta-D-fructose 6-phosphate + phosphate. Its pathway is carbohydrate biosynthesis; gluconeogenesis. This is Fructose-1,6-bisphosphatase class 1 from Polynucleobacter necessarius subsp. necessarius (strain STIR1).